Here is a 174-residue protein sequence, read N- to C-terminus: Translation initiation factor IF-3 (174 aa).

The protein belongs to the IF-3 family. Monomer.

The protein localises to the cytoplasm. In terms of biological role, IF-3 binds to the 30S ribosomal subunit and shifts the equilibrium between 70S ribosomes and their 50S and 30S subunits in favor of the free subunits, thus enhancing the availability of 30S subunits on which protein synthesis initiation begins. This chain is Translation initiation factor IF-3, found in Xanthobacter autotrophicus (strain ATCC BAA-1158 / Py2).